The following is a 1029-amino-acid chain: DNA repair protein RAD5A (1029 aa).

The disordered stretch occupies residues 83-104 (SVGANHRVEEENESVNGGGEES). The region spanning 406 to 622 (PSTLQMARGG…YSLLRFLRIE (217 aa)) is the Helicase ATP-binding domain. Residue 419–426 (DAMGLGKT) coordinates ATP. The short motif at 573–576 (DEAH) is the DEAH box element. The RING-type zinc finger occupies 794–834 (CPICLEALEDAVLTPCAHRLCRECLLASWRNSTSGLCPVCR). Residues 864-1029 (KITALLEELE…RIEELKMLFT (166 aa)) enclose the Helicase C-terminal domain.

Belongs to the SNF2/RAD54 helicase family. RAD16 subfamily.

It localises to the nucleus. In terms of biological role, functions in error-free postreplication DNA repair or DNA-damage tolerance (DTT) pathway. Required for homologous recombination (HR) induced by DNA double-strand break (DSB) in somatic cells. Required for damage-induced DNA repair, independently of MUS81 and RECQL4A. Plays a role in synthesis-dependent strand annealing (SDSA) but not in single-strand annealing (SSA). Possesses double-stranded DNA-dependent ATPase activity. Is able to regress replication forks with preference for forks with a leading strand gap. Is able to catalyze branch migration of Holliday junctions and is unaffected by protein blockades. The sequence is that of DNA repair protein RAD5A from Arabidopsis thaliana (Mouse-ear cress).